Reading from the N-terminus, the 466-residue chain is Glycylpeptide N-tetradecanoyltransferase (466 aa).

Residues 1–21 are disordered; it reads MDNENNKNTKNSQQDSSFSEG. Residues 8-19 are compositionally biased toward polar residues; it reads NTKNSQQDSSFS. Residue Ser17 is modified to Phosphoserine. Tetradecanoyl-CoA is bound by residues 51–54, 185–187, and 193–197; these read FKFW, LCI, and SKRLT. Residue Ile466 is the Proton acceptor; via carboxylate of the active site.

The protein belongs to the NMT family. Monomer.

The protein resides in the cytoplasm. It carries out the reaction N-terminal glycyl-[protein] + tetradecanoyl-CoA = N-tetradecanoylglycyl-[protein] + CoA + H(+). In terms of biological role, adds a myristoyl group to the N-terminal glycine residue of certain cellular proteins. In Schizosaccharomyces pombe (strain 972 / ATCC 24843) (Fission yeast), this protein is Glycylpeptide N-tetradecanoyltransferase (nmt1).